The sequence spans 224 residues: Heme response regulator HssR (224 aa).

The Response regulatory domain occupies 3–116; sequence QCLVVDDDPR…ELIFRIRAVL (114 aa). The residue at position 52 (Asp-52) is a 4-aspartylphosphate. A DNA-binding region (ompR/PhoB-type) is located at residues 124-222; it reads NSEMTIGNLT…VRGQGYKVEN (99 aa).

Post-translationally, phosphorylated by HssS.

The protein resides in the cytoplasm. Its function is as follows. Member of the two-component regulatory system HssS/HssR involved in intracellular heme homeostasis and tempering of staphylococcal virulence. Phosphorylated HssR binds to a direct repeat sequence within hrtAB promoter and activates the expression of hrtAB, an efflux pump, in response to extracellular heme, hemin, hemoglobin or blood. The chain is Heme response regulator HssR (hssR) from Staphylococcus aureus (strain COL).